We begin with the raw amino-acid sequence, 315 residues long: ADP/ATP translocase (315 aa).

Residues 1 to 13 (MSNKQETKILGMP) lie on the Mitochondrial intermembrane side of the membrane. Solcar repeat units lie at residues 13-106 (PPFV…FKAM) and 118-210 (KWMA…IKPV). A helical membrane pass occupies residues 14-37 (PFVVDFLMGGVSAAVSKTAAAPIE). Lys30 is a binding site for bongkrekate. The Mitochondrial matrix segment spans residues 38–80 (RIKLLVQNQDEMIKAGRLDRRYNGIIDCFRRTTADEGLMALWR). A cardiolipin-binding positions include Ile62 and 81–83 (GNT). Residues 81-104 (GNTANVIRYFPTQALNFAFRDKFK) form a helical membrane-spanning segment. Position 88 (Arg88) interacts with ADP. Bongkrekate-binding positions include 88–89 (RY) and Asn96. Over 105-115 (AMFGYKKDKDG) the chain is Mitochondrial intermembrane. A helical transmembrane segment spans residues 116-145 (YAKWMAGNLASGGAAGATSLLFVYSLDYAR). Topologically, residues 146–184 (TRLANDAKSAKGGGARQFNGLIDVYRKTLASDGIAGLYR) are mitochondrial matrix. A cardiolipin is bound by residues Leu166 and 184-185 (RG). Residues 185-213 (GFGPSVAGIVVYRGLYFGMYDSIKPVVLV) form a helical membrane-spanning segment. 196 to 197 (YR) is a bongkrekate binding site. The Mitochondrial intermembrane portion of the chain corresponds to 214 to 216 (GPL). A helical transmembrane segment spans residues 217–242 (ANNFLASFLLGWCVTTGAGIASYPLD). Residues 218–304 (NNFLASFLLG…LSIYDQLQIL (87 aa)) form a Solcar repeat. Over 243–283 (TVRRRMMMTSGEAVKYKSSIDAFRQIIAKEGVKSLFKGAGA) the chain is Mitochondrial matrix. Arg245 contacts ADP. Positions 245 to 250 (RRRMMM) match the Nucleotide carrier signature motif motif. A cardiolipin contacts are provided by residues 260–261 (SS) and 280–282 (GAG). A helical membrane pass occupies residues 284–304 (NILRGVAGAGVLSIYDQLQIL). The Mitochondrial intermembrane portion of the chain corresponds to 305–315 (LFGKAFKGGSG).

Belongs to the mitochondrial carrier (TC 2.A.29) family. Monomer.

It localises to the mitochondrion inner membrane. It catalyses the reaction ADP(in) + ATP(out) = ADP(out) + ATP(in). The matrix-open state (m-state) is inhibited by the membrane-permeable bongkrekic acid (BKA). The cytoplasmic-open state (c-state) is inhibited by the membrane-impermeable toxic inhibitor carboxyatractyloside (CATR). In terms of biological role, ADP:ATP antiporter that mediates import of ADP into the mitochondrial matrix for ATP synthesis, and export of ATP out to fuel the cell. Cycles between the cytoplasmic-open state (c-state) and the matrix-open state (m-state): operates by the alternating access mechanism with a single substrate-binding site intermittently exposed to either the cytosolic (c-state) or matrix (m-state) side of the inner mitochondrial membrane. The sequence is that of ADP/ATP translocase from Thermothelomyces thermophilus (strain ATCC 42464 / BCRC 31852 / DSM 1799) (Sporotrichum thermophile).